We begin with the raw amino-acid sequence, 634 residues long: Chaperone protein dnaK2 (634 aa).

Threonine 197 carries the phosphothreonine; by autocatalysis modification. The segment at isoleucine 592–aspartate 634 is disordered. Over residues aspartate 622–aspartate 634 the composition is skewed to acidic residues.

Belongs to the heat shock protein 70 family.

Functionally, acts as a chaperone. The protein is Chaperone protein dnaK2 (dnaK2) of Prochlorococcus marinus subsp. pastoris (strain CCMP1986 / NIES-2087 / MED4).